Here is a 211-residue protein sequence, read N- to C-terminus: Ras-related protein Rab-38 (211 aa).

Residues glycine 19, valine 20, glycine 21, lysine 22, threonine 23, serine 24, serine 35, serine 36, tyrosine 38, and threonine 41 each coordinate GTP. Position 23 (threonine 23) interacts with Mg(2+). The Switch 1 signature appears at 32–46 (QNFSSHYRATIGVDF). The Mg(2+) site is built by threonine 41 and aspartate 65. GTP-binding residues include glycine 68, lysine 128, aspartate 130, alanine 160, and lysine 161. The Switch 2 signature appears at 68 to 81 (GQERFGNMTRVYYR). Cysteine 205 is lipidated: S-palmitoyl cysteine. Cysteine 208 carries S-geranylgeranyl cysteine lipidation.

It belongs to the small GTPase superfamily. Rab family. Interacts with ANKRD27. Requires Mg(2+) as cofactor.

The protein resides in the cell membrane. It localises to the cytoplasmic vesicle. It is found in the phagosome. Its subcellular location is the phagosome membrane. The protein localises to the melanosome. The protein resides in the melanosome membrane. The enzyme catalyses GTP + H2O = GDP + phosphate + H(+). Its activity is regulated as follows. Regulated by guanine nucleotide exchange factors (GEFs) including the BLOC-3 complex composed of HPS1 and HPS4 which promote the exchange of bound GDP for free GTP. Regulated by GTPase activating proteins (GAPs) including SGSM2 which increase the GTP hydrolysis activity. Inhibited by GDP dissociation inhibitors (GDIs). Its function is as follows. The small GTPases Rab are key regulators of intracellular membrane trafficking, from the formation of transport vesicles to their fusion with membranes. Rabs cycle between an inactive GDP-bound form and an active GTP-bound form that is able to recruit to membranes different sets of downstream effectors directly responsible for vesicle formation, movement, tethering and fusion. RAB38 plays a role in the maturation of phagosomes that engulf pathogens, such as S.aureus and Mycobacterium. May be involved in melanosomal transport and docking. Involved in the proper sorting of TYRP1. Involved in peripheral melanosomal distribution of TYRP1 in melanocytes; the function, which probably is implicating vesicle-trafficking, includes cooperation with ANKRD27 and VAMP7. Plays an important role in the control of melanin production and melanosome biogenesis. In concert with RAB32, regulates the proper trafficking of melanogenic enzymes TYR, TYRP1 and DCT/TYRP2 to melanosomes in melanocytes. The sequence is that of Ras-related protein Rab-38 from Mus musculus (Mouse).